Reading from the N-terminus, the 413-residue chain is MLEAPSFDKMLGMFYYATDTCPSGGVIKRSPEDFVVEEVLLDGTVIATSGVELRPRVGNWTWIHVVKRNVDTIKLVLRLARALGLSHRDVSVGGLKDTKAVTSQIISVRGPVANLPQLPGVQFLGMWSMDKPITPSQIYGNRFTIILRDVERISCAEGALEALKKTAAPNYYGYQRFGTIRPVTHLLGKALLKKDPHLFFEVMFCKIFSRESEVAKRAREAACKGDYAKALELFPKKFVEERVFLKRLAGGYDMWNAIMAIPPQILRVYIEAAQSYIFNRFLSIRMEIGPIDRPVEGDLVEINRQIAYYAEGLGGEVVLPVVGAGVRMPRGKVGEALLRVLREEGLDPSAFLKMPRGLRVYGTYRRVRLEPAGFEYKIMGNDVFMQFTLPRGSYATVLLREVVKPAEPHKHGF.

The active-site Nucleophile is Asp-97. In terms of domain architecture, TRUD spans 167–370; that stretch reads AAPNYYGYQR…YGTYRRVRLE (204 aa).

This sequence belongs to the pseudouridine synthase TruD family.

It catalyses the reaction uridine(13) in tRNA = pseudouridine(13) in tRNA. In terms of biological role, could be responsible for synthesis of pseudouridine from uracil-13 in transfer RNAs. This is Probable tRNA pseudouridine synthase D from Pyrobaculum aerophilum (strain ATCC 51768 / DSM 7523 / JCM 9630 / CIP 104966 / NBRC 100827 / IM2).